Consider the following 508-residue polypeptide: Maturase K (508 aa).

Belongs to the intron maturase 2 family. MatK subfamily.

The protein localises to the plastid. The protein resides in the chloroplast. Functionally, usually encoded in the trnK tRNA gene intron. Probably assists in splicing its own and other chloroplast group II introns. In Abies bracteata (Bristle-cone fir), this protein is Maturase K.